Reading from the N-terminus, the 231-residue chain is Uroporphyrinogen-III C-methyltransferase (231 aa).

S-adenosyl-L-homocysteine contacts are provided by residues proline 10, glycine 85–aspartate 87, threonine 115–serine 116, methionine 166, and alanine 218.

The protein belongs to the precorrin methyltransferase family. Homodimer.

The catalysed reaction is uroporphyrinogen III + 2 S-adenosyl-L-methionine = precorrin-2 + 2 S-adenosyl-L-homocysteine + H(+). The enzyme catalyses uroporphyrinogen III + S-adenosyl-L-methionine = precorrin-1 + S-adenosyl-L-homocysteine + H(+). It catalyses the reaction precorrin-1 + S-adenosyl-L-methionine = precorrin-2 + S-adenosyl-L-homocysteine. It functions in the pathway cofactor biosynthesis; adenosylcobalamin biosynthesis; precorrin-2 from uroporphyrinogen III: step 1/1. With respect to regulation, does not show substrate inhibition at uroporphyrinogen III concentrations of up to 20 uM, in contrast to SUMT from Sinorhizobium (previously believed to be P.denitrificans). Its function is as follows. Catalyzes the two successive C-2 and C-7 methylation reactions involved in the conversion of uroporphyrinogen III to precorrin-2 via the intermediate formation of precorrin-1. It is a step in the biosynthesis of both cobalamin (vitamin B12) and coenzyme F430. The sequence is that of Uroporphyrinogen-III C-methyltransferase (cobA) from Methanobacterium ivanovii.